A 333-amino-acid polypeptide reads, in one-letter code: Phenylalanine--tRNA ligase alpha subunit (333 aa).

Glutamate 254 is a Mg(2+) binding site.

Belongs to the class-II aminoacyl-tRNA synthetase family. Phe-tRNA synthetase alpha subunit type 1 subfamily. As to quaternary structure, tetramer of two alpha and two beta subunits. The cofactor is Mg(2+).

It localises to the cytoplasm. It carries out the reaction tRNA(Phe) + L-phenylalanine + ATP = L-phenylalanyl-tRNA(Phe) + AMP + diphosphate + H(+). The sequence is that of Phenylalanine--tRNA ligase alpha subunit from Xylella fastidiosa (strain M12).